The chain runs to 307 residues: MTLQSVLLGAMIILGPILSMTSSNWIIIWIGLEISLLGFVSYYMLMKKIMSGEGIMMYFLIQSVSSTVMLLNGLYIFVNHASSYIYLFIFITMLMLKIGMFPLHFWIIPVYSKLSYLNIGIVGLLLKIVPMWILMHMGCITSEMLNLITMLSVTSMLFGALIGMNLSKMRMVLGASTITHNGWLGMSCISGSLFKYFITYGFSLVILLVFLYLGDKMSISLSLLSLSGLPPFMLFIGKINVLLMMMETNLWFIVLVFAILSAVISLVYYLKFSVMFFMNMKNNYLKHYKMAMFLLVNVTFGMLLFLT.

10 helical membrane passes run 1 to 21 (MTLQ…LSMT), 25 to 45 (WIII…YYML), 58 to 78 (YFLI…YIFV), 88 to 108 (FIFI…FWII), 119 to 139 (IGIV…HMGC), 144 to 164 (MLNL…LIGM), 193 to 213 (LFKY…FLYL), 217 to 237 (MSIS…LFIG), 250 to 270 (LWFI…VYYL), and 287 to 307 (HYKM…LFLT).

It belongs to the complex I subunit 2 family.

The protein localises to the mitochondrion inner membrane. The catalysed reaction is a ubiquinone + NADH + 5 H(+)(in) = a ubiquinol + NAD(+) + 4 H(+)(out). Its function is as follows. Core subunit of the mitochondrial membrane respiratory chain NADH dehydrogenase (Complex I) that is believed to belong to the minimal assembly required for catalysis. Complex I functions in the transfer of electrons from NADH to the respiratory chain. The immediate electron acceptor for the enzyme is believed to be ubiquinone. The sequence is that of NADH-ubiquinone oxidoreductase chain 2 (ND2) from Albinaria caerulea (Land snail).